The following is a 578-amino-acid chain: A-type ATP synthase subunit A (578 aa).

Residue 228–235 coordinates ATP; the sequence is GPFGSGKT.

This sequence belongs to the ATPase alpha/beta chains family. Has multiple subunits with at least A(3), B(3), C, D, E, F, H, I and proteolipid K(x).

The protein localises to the cell membrane. It carries out the reaction ATP + H2O + 4 H(+)(in) = ADP + phosphate + 5 H(+)(out). Component of the A-type ATP synthase that produces ATP from ADP in the presence of a proton gradient across the membrane. The A chain is the catalytic subunit. The polypeptide is A-type ATP synthase subunit A (Methanosarcina barkeri (strain Fusaro / DSM 804)).